Reading from the N-terminus, the 212-residue chain is Large ribosomal subunit protein bL25 (212 aa).

Residues 1–25 (MSQSTIHKIAVKKRTETGKNENNRL) are disordered. The segment covering 13 to 24 (KRTETGKNENNR) has biased composition (basic and acidic residues).

This sequence belongs to the bacterial ribosomal protein bL25 family. CTC subfamily. In terms of assembly, part of the 50S ribosomal subunit; part of the 5S rRNA/L5/L18/L25 subcomplex. Contacts the 5S rRNA. Binds to the 5S rRNA independently of L5 and L18.

Its function is as follows. This is one of the proteins that binds to the 5S RNA in the ribosome where it forms part of the central protuberance. In Leptospira borgpetersenii serovar Hardjo-bovis (strain L550), this protein is Large ribosomal subunit protein bL25.